The following is a 285-amino-acid chain: GTP-binding protein 8 (285 aa).

An EngB-type G domain is found at 110–283; that stretch reads RQPEVCFIGR…KCFIADITGS (174 aa). Residues 118–125, 147–151, 165–168, 227–230, and 262–264 each bind GTP; these read GRSNVGKS, GHTKK, DMPG, TKID, and ISA. Mg(2+) is bound by residues S125 and T149.

This sequence belongs to the TRAFAC class TrmE-Era-EngA-EngB-Septin-like GTPase superfamily. EngB GTPase family. Requires Mg(2+) as cofactor.

This is GTP-binding protein 8 (Gtpbp8) from Rattus norvegicus (Rat).